Reading from the N-terminus, the 607-residue chain is Polyphenol oxidase, chloroplastic (607 aa).

Residues 1-103 (MASLPWSLTT…LGATKPLAFG (103 aa)) constitute a chloroplast transit peptide. The tract at residues 39–73 (RNRSRRFAPSKVSCNSANGDPNSDSTSDVRETSSG) is disordered. The span at 50-64 (VSCNSANGDPNSDST) shows a compositional bias: polar residues. 2 disulfide bridges follow: C114-C129 and C128-C191. Cu cation is bound by residues H190, H211, H220, H342, H346, and H375. The segment at residues 194–211 (CQGAYDQVGYTDLELQVH) is a cross-link (2'-(S-cysteinyl)-histidine (Cys-His)).

It belongs to the tyrosinase family. Cu(2+) is required as a cofactor.

It is found in the plastid. Its subcellular location is the chloroplast thylakoid lumen. It catalyses the reaction 2 catechol + O2 = 2 1,2-benzoquinone + 2 H2O. Functionally, catalyzes the oxidation of mono- and o-diphenols to o-diquinones. The chain is Polyphenol oxidase, chloroplastic from Vitis vinifera (Grape).